Here is a 386-residue protein sequence, read N- to C-terminus: GLABROUS1 enhancer-binding protein-like 1 (386 aa).

Disordered regions lie at residues 1–58 (MVTP…KKKK) and 197–314 (ESGE…DDDD). The span at 216 to 226 (EEIRDNDETAR) shows a compositional bias: basic and acidic residues. Residues 221 to 285 (NDETARKAQQ…LKEHEEVANT (65 aa)) adopt a coiled-coil conformation. Polar residues predominate over residues 257-267 (DNNGTTQIAQQ). Low complexity predominate over residues 291–300 (NGAAKTTENG). The interval 354–375 (LSDEWKALCVEERRLNIKKLRF) is non-canonical leucine-zipper.

This sequence belongs to the GeBP family. Homo- and heterodimers. Interacts with GEBP, GPL2 and GPL3. Interacts with GEBP. In terms of tissue distribution, expressed in the apical meristem and young leaf primordia. Detected in the vascular tissues of cotyledons and leaves, in hydathodes and at the base of flowers and siliques, but not in roots.

The protein resides in the nucleus. In terms of biological role, probable transcription factor. May play redundant roles with GEBP and GPL2 in cytokinin responses by regulating the transcript levels of type-A ARR response genes. Involved in stress responses. Plays a repressive role in cell expansion by counteracting the positive role of CPR5 in this process, but does not regulate cell proliferation or endoreduplication. The protein is GLABROUS1 enhancer-binding protein-like 1 of Arabidopsis thaliana (Mouse-ear cress).